A 381-amino-acid chain; its full sequence is GDP-mannose transporter (381 aa).

At 1–40 (MADDKKTNDYTVEMDKLDQGSKNFEAPLPPVQPRSAPNAQ) the chain is on the cytoplasmic side. The chain crosses the membrane as a helical span at residues 41–61 (LANNPILPVLAYCGSSIMMTV). Over 62–71 (MNKYVLSGTD) the chain is Lumenal. The chain crosses the membrane as a helical span at residues 72–92 (FNLNFLLLCVQSIVCIVAIQT). At 93-110 (CKASKLITYRDFNADEAK) the chain is on the cytoplasmic side. A helical transmembrane segment spans residues 111 to 127 (KWFPITLLLIGMIYTGS). The Lumenal portion of the chain corresponds to 128-134 (KALQFLS). A helical transmembrane segment spans residues 135-151 (IPVYTIFKNLTIILIAY). The Cytoplasmic segment spans residues 152–160 (GEVLWFGGS). The helical transmembrane segment at 161–182 (VTGLTLFSFGLMVLSSIIAAWA) threads the bilayer. The Lumenal portion of the chain corresponds to 183–200 (DIKHAVESSGDATAKVST). The helical transmembrane segment at 201-221 (LNAGYIWMLINCLCTSSYVLG) threads the bilayer. Residues 222 to 233 (MRKRIKLTNFKD) are Cytoplasmic-facing. Residues 234-254 (FDTMFYNNLLSIPVLLVLTFL) traverse the membrane as a helical segment. Residues 255-274 (MEDWSSANITRNFPPADRNG) lie on the Lumenal side of the membrane. Asparagine 262 carries N-linked (GlcNAc...) asparagine glycosylation. The chain crosses the membrane as a helical span at residues 275–295 (IMFAMILSGLSSVFISYTSAW). At 296-303 (CVRVTSST) the chain is on the cytoplasmic side. A helical transmembrane segment spans residues 304 to 324 (TYSMVGALNKLPIAVSGLIFF). Topologically, residues 325 to 327 (DAP) are lumenal. The chain crosses the membrane as a helical span at residues 328 to 348 (VTFPSVSAIVVGFVSGIVYAV). At 349-381 (AKIKQNAKPKTGVLPTSNPVSASSQSMRDSLRS) the chain is on the cytoplasmic side. Residues 362-381 (LPTSNPVSASSQSMRDSLRS) form a disordered region.

The protein belongs to the TPT transporter family. SLC35D subfamily. As to quaternary structure, homooligomer.

Its subcellular location is the golgi apparatus membrane. The protein resides in the cytoplasmic vesicle membrane. The protein localises to the endoplasmic reticulum membrane. In terms of biological role, involved in the import of GDP-mannose from the cytoplasm into the Golgi lumen. The polypeptide is GDP-mannose transporter (gmt1) (Aspergillus clavatus (strain ATCC 1007 / CBS 513.65 / DSM 816 / NCTC 3887 / NRRL 1 / QM 1276 / 107)).